The sequence spans 24 residues: Lectin (24 aa).

Belongs to the leguminous lectin family. As to quaternary structure, homotetramer.

Functionally, agglutinates erythrocytes of blood group A. Binds in decreasing order of affinity: N-acetyl-D-galactosamine, D-galactose, and D-galactosamine. The chain is Lectin from Crotalaria pallida (Smooth rattlebox).